The sequence spans 402 residues: Shaggy-related protein kinase GSK2 (402 aa).

The tract at residues 1–38 is disordered; that stretch reads MDQPAPAPEPMLLDAQPPAAVACDKKQQEGEAPYAEGN. The Protein kinase domain maps to 63 to 347; the sequence is YMAERVVGTG…ALDACAHPFF (285 aa). ATP-binding positions include 69-77 and lysine 92; that span reads VGTGSFGIV. The Proton acceptor role is filled by aspartate 188.

The protein belongs to the protein kinase superfamily. CMGC Ser/Thr protein kinase family. GSK-3 subfamily. In terms of assembly, interacts with DLT. Interacts with OFP8. Interacts with GRF4. Interacts with PUB24. Interacts with SMOS1. Post-translationally, autophosphorylated. As to expression, expressed in lamina joints, vascular tissue and nodes.

The protein resides in the cytoplasm. Its subcellular location is the nucleus. It catalyses the reaction L-seryl-[protein] + ATP = O-phospho-L-seryl-[protein] + ADP + H(+). The catalysed reaction is L-threonyl-[protein] + ATP = O-phospho-L-threonyl-[protein] + ADP + H(+). In terms of biological role, serine-threonine kinase that acts as a negative regulator of brassinosteroid (BR) signaling. Phosphorylates DLT and BZR1, two positive regulators that mediates several BR responses. Phosphorylation of DLT and BZR1 inhibits their activities in BR signaling. Phosphorylates OFP8, a positive regulator of BR responses. Phosphorylated OFP8 shuttles from the nucleus to the cytoplasm where it is degraded by the proteasome. Phosphorylates the E3 ubiquitin-protein ligase PUB24, a negative regulator of BR signaling, which targets BZR1 and promotes its degradation via the 26S proteasome. Phosphorylation of PUB24 increases its stability. Phosphorylates the AP2-ERF transcription factor SMOS1, a positive regulator of BR signaling, which cooperatively functions in a transactivating complex with BZR1 to enhance the transcription of BR biosynthetic genes. Phosphorylation of SMOS1 leads to its degradation by an unknown mechanism. The protein is Shaggy-related protein kinase GSK2 of Oryza sativa subsp. japonica (Rice).